Here is an 85-residue protein sequence, read N- to C-terminus: Large ribosomal subunit protein bL27 (85 aa).

Positions Met-1–His-25 are disordered.

Belongs to the bacterial ribosomal protein bL27 family.

The sequence is that of Large ribosomal subunit protein bL27 from Buchnera aphidicola subsp. Baizongia pistaciae (strain Bp).